Consider the following 931-residue polypeptide: Synaptopodin (931 aa).

Disordered regions lie at residues 56–78 and 113–243; these read EEEG…APAI and ASVS…MEGY. Position 134 is a phosphoserine (S134). Residues 136-148 are compositionally biased toward basic and acidic residues; it reads TEKDLKEAKERSQ. Composition is skewed to polar residues over residues 153–164 and 188–200; these read QLTTPPSSNSRG and PKLS…TGHP. A phosphoserine mark is found at S202, S222, and S258. Over residues 214–232 the composition is skewed to low complexity; it reads PTSPSKPGSPKHSSSQSPS. A disordered region spans residues 280–420; it reads GLHLSQNRET…SSSGPPAADL (141 aa). Composition is skewed to polar residues over residues 282–293 and 309–370; these read HLSQNRETQQSS and INQN…NTPS. Residues 373–384 are compositionally biased toward basic and acidic residues; it reads DGQRPVPAEEVR. Phosphoserine occurs at positions 490 and 514. Disordered stretches follow at residues 542–591 and 691–711; these read RRPL…KGQV and SPRI…EASG. Residue T549 is modified to Phosphothreonine. The short motif at 551 to 554 is the PPxY motif element; sequence PPTY. Positions 556–568 are enriched in polar residues; that stretch reads ETLSTAPVASQVR. S569 bears the Phosphoserine mark. Residues 569 to 580 are compositionally biased toward low complexity; sequence SPPSYSTLYPSS. Positions 570 to 573 match the PPxY motif motif; it reads PPSY. A phosphoserine mark is found at S691, S742, S746, and S767. T771 is modified (phosphothreonine). Positions 775 to 918 are disordered; sequence SLYHGYLPEN…RPSFSTRNAG (144 aa). Over residues 816 to 841 the composition is skewed to low complexity; the sequence is SSRATSSRASSRTVSPRAASPAKPSS. S835 is modified (phosphoserine). R850 carries the omega-N-methylarginine modification. Residue S856 is modified to Phosphoserine. Residues 874-895 show a composition bias toward polar residues; the sequence is VQDSLQPTAVSPTYSSDISPVS.

Belongs to the synaptopodin family. As to quaternary structure, interacts with BAIAP1. Interacts with actin. Interacts (via PPxY motifs) with WWC1 (via WW domains). In terms of processing, O-glycosylated. As to expression, expressed at high levels in brain and at moderate, but still significant levels in the heart, skeletal muscle, lung and kidney. In brain, expressed in the cerebral cortex, hippocampus, olfactory bulb and striatum.

The protein resides in the cytoplasm. It is found in the cytoskeleton. It localises to the cell junction. The protein localises to the tight junction. Its subcellular location is the perikaryon. The protein resides in the cell projection. It is found in the dendritic spine. It localises to the postsynaptic density. The protein localises to the synapse. Its subcellular location is the cytosol. Functionally, actin-associated protein that may play a role in modulating actin-based shape and motility of dendritic spines and renal podocyte foot processes. Seems to be essential for the formation of spine apparatuses in spines of telencephalic neurons, which is involved in synaptic plasticity. The polypeptide is Synaptopodin (Synpo) (Rattus norvegicus (Rat)).